Here is a 337-residue protein sequence, read N- to C-terminus: Glycerol-3-phosphate dehydrogenase [NAD(P)+] (337 aa).

The NADPH site is built by Trp-11, Arg-30, and Lys-113. Sn-glycerol 3-phosphate is bound by residues Lys-113, Gly-141, and Ser-143. An NADPH-binding site is contributed by Ala-145. The sn-glycerol 3-phosphate site is built by Lys-196, Asp-249, Ser-259, Arg-260, and Asn-261. Residue Lys-196 is the Proton acceptor of the active site. Position 260 (Arg-260) interacts with NADPH. NADPH-binding residues include Val-284 and Glu-286.

Belongs to the NAD-dependent glycerol-3-phosphate dehydrogenase family.

The protein resides in the cytoplasm. The catalysed reaction is sn-glycerol 3-phosphate + NAD(+) = dihydroxyacetone phosphate + NADH + H(+). The enzyme catalyses sn-glycerol 3-phosphate + NADP(+) = dihydroxyacetone phosphate + NADPH + H(+). The protein operates within membrane lipid metabolism; glycerophospholipid metabolism. In terms of biological role, catalyzes the reduction of the glycolytic intermediate dihydroxyacetone phosphate (DHAP) to sn-glycerol 3-phosphate (G3P), the key precursor for phospholipid synthesis. The sequence is that of Glycerol-3-phosphate dehydrogenase [NAD(P)+] from Leptothrix cholodnii (strain ATCC 51168 / LMG 8142 / SP-6) (Leptothrix discophora (strain SP-6)).